Consider the following 276-residue polypeptide: MKNVYVWPHFDPILVRFGPFAIHYYALAYITALVLGWRLMRRLVREAPVVATHEQVDDFLSWATLGVVLGGRLGYILFYQPVYFLDHLNRTYAVWDGGMSFHGGMLGVAVAILIYCRRHGIDPWRFGDRVAVPVPIGLFLGRIANFVNGELWGRPAPAWFPFRMIYPESGSDVPRYPSELIEATLEGLVLFIVLLIASRNERIRSQPGYLGGMFVMGYGIARTTAECFRQPDWFLGYLMFGLTMGQLLSIPMIVIGATMIWRAKYVARRQGALATA.

The next 7 helical transmembrane spans lie at 17–37 (FGPFAIHYYALAYITALVLGW), 59–79 (FLSWATLGVVLGGRLGYILFY), 94–114 (VWDGGMSFHGGMLGVAVAILI), 132–152 (VPVPIGLFLGRIANFVNGELW), 177–197 (PSELIEATLEGLVLFIVLLIA), 208–225 (GYLGGMFVMGYGIARTTA), and 235–255 (LGYLMFGLTMGQLLSIPMIVI). Arg142 contacts a 1,2-diacyl-sn-glycero-3-phospho-(1'-sn-glycerol).

This sequence belongs to the Lgt family.

It is found in the cell inner membrane. It carries out the reaction L-cysteinyl-[prolipoprotein] + a 1,2-diacyl-sn-glycero-3-phospho-(1'-sn-glycerol) = an S-1,2-diacyl-sn-glyceryl-L-cysteinyl-[prolipoprotein] + sn-glycerol 1-phosphate + H(+). The protein operates within protein modification; lipoprotein biosynthesis (diacylglyceryl transfer). In terms of biological role, catalyzes the transfer of the diacylglyceryl group from phosphatidylglycerol to the sulfhydryl group of the N-terminal cysteine of a prolipoprotein, the first step in the formation of mature lipoproteins. This chain is Phosphatidylglycerol--prolipoprotein diacylglyceryl transferase, found in Acidiphilium cryptum (strain JF-5).